The chain runs to 880 residues: Valine--tRNA ligase (880 aa).

A 'HIGH' region motif is present at residues 49–59; that stretch reads PNVTGKLHLGH. The 'KMSKS' region motif lies at 525-529; the sequence is KMSKS. Lysine 528 contributes to the ATP binding site. Positions 809–880 form a coiled coil; the sequence is LEGLINIEEE…VKARLAELKR (72 aa).

This sequence belongs to the class-I aminoacyl-tRNA synthetase family. ValS type 1 subfamily. In terms of assembly, monomer.

It localises to the cytoplasm. It catalyses the reaction tRNA(Val) + L-valine + ATP = L-valyl-tRNA(Val) + AMP + diphosphate. Catalyzes the attachment of valine to tRNA(Val). As ValRS can inadvertently accommodate and process structurally similar amino acids such as threonine, to avoid such errors, it has a 'posttransfer' editing activity that hydrolyzes mischarged Thr-tRNA(Val) in a tRNA-dependent manner. The sequence is that of Valine--tRNA ligase from Geobacillus kaustophilus (strain HTA426).